The chain runs to 83 residues: Putative beta-neurotoxin RjAa15f (83 aa).

Residues 1–18 form the signal peptide; that stretch reads MKILIFIIASFMLIGVEC. In terms of domain architecture, LCN-type CS-alpha/beta spans 19–82; that stretch reads KEGYPMGRNG…VWDSSNNKCV (64 aa). 4 disulfides stabilise this stretch: cysteine 29–cysteine 81, cysteine 33–cysteine 55, cysteine 40–cysteine 62, and cysteine 44–cysteine 64.

The protein belongs to the long (4 C-C) scorpion toxin superfamily. Sodium channel inhibitor family. Beta subfamily. In terms of tissue distribution, expressed by the venom gland.

The protein resides in the secreted. Its function is as follows. Beta toxins bind voltage-independently at site-4 of sodium channels (Nav) and shift the voltage of activation toward more negative potentials thereby affecting sodium channel activation and promoting spontaneous and repetitive firing. The polypeptide is Putative beta-neurotoxin RjAa15f (Rhopalurus junceus (Caribbean blue scorpion)).